Consider the following 210-residue polypeptide: Thymidylate kinase (210 aa).

9–16 (GPEGAGKT) contacts ATP.

Belongs to the thymidylate kinase family.

The enzyme catalyses dTMP + ATP = dTDP + ADP. Phosphorylation of dTMP to form dTDP in both de novo and salvage pathways of dTTP synthesis. The sequence is that of Thymidylate kinase from Thermomicrobium roseum (strain ATCC 27502 / DSM 5159 / P-2).